Reading from the N-terminus, the 160-residue chain is Large ribosomal subunit protein eL21 (160 aa).

This sequence belongs to the eukaryotic ribosomal protein eL21 family.

This Encephalitozoon cuniculi (strain GB-M1) (Microsporidian parasite) protein is Large ribosomal subunit protein eL21 (RPL21).